The primary structure comprises 633 residues: Rab11 family-interacting protein 4 (633 aa).

2 EF-hand domains span residues 17–52 (LFLQRLRQVFDACDGDADGFIKVEHFVALGLQFAQG) and 50–85 (AQGDEVKKLAKRLDPNAQGRIGFKDFCHGVLAMKGC). D30, D32, D34, D63, N65, R69, and D74 together coordinate Ca(2+). Disordered regions lie at residues 152–182 (SDLDSAMYSTPSSEASDEGRNEDKAGGLGSL) and 218–257 (GEGEDIDYSPGSPCPDDESRTNALSDLGSSVPSSAGQTPR). Polar residues predominate over residues 238–254 (TNALSDLGSSVPSSAGQ). Residues 410-613 (AREKGTEIVL…EEINYRLRQY (204 aa)) are a coiled coil. The 63-residue stretch at 570–632 (EAKSLFSTQT…DHNPSILEIK (63 aa)) folds into the FIP-RBD domain.

As to quaternary structure, homodimer. Forms a complex with Rab11 (rab11a or rab11b) and arf6.

It is found in the recycling endosome membrane. Its subcellular location is the cleavage furrow. The protein localises to the midbody. It localises to the cytoplasmic vesicle. In terms of biological role, acts as a regulator of endocytic traffic by participating in membrane delivery. Required for the abscission step in cytokinesis, possibly by acting as an 'address tag' delivering recycling endosome membranes to the cleavage furrow during late cytokinesis. In Xenopus tropicalis (Western clawed frog), this protein is Rab11 family-interacting protein 4 (rab11fip4).